Here is a 268-residue protein sequence, read N- to C-terminus: Receptor expression-enhancing protein 2 (268 aa).

2 helical membrane passes run 1–21 (MVSWIISRMVVLAFGTLYPAY) and 35–55 (YVKWMMYWIVFALFTTAETIT). A disordered region spans residues 170-268 (GDDTHTAATL…TTANNVAESP (99 aa)). Residues 180 to 196 (PRAKTATRTVRATPVPA) are compositionally biased toward low complexity. Positions 199 to 216 (ESQHSSRSDDQSDSRTEH) are enriched in basic and acidic residues. Low complexity predominate over residues 228-248 (RIAITRAAKKPAAAKTEQTTK). Positions 249–258 (TVKKAPKKKP) are enriched in basic residues.

This sequence belongs to the DP1 family. In terms of assembly, interacts with odorant receptor proteins.

Its subcellular location is the membrane. In terms of biological role, may enhance the cell surface expression of odorant receptors. This is Receptor expression-enhancing protein 2 (reep2) from Danio rerio (Zebrafish).